An 865-amino-acid polypeptide reads, in one-letter code: Anaphase-promoting complex subunit 6 (865 aa).

TPR repeat units lie at residues 11–42 (IEKQ…LNLV), 46–75 (SKEY…LIQK), and 88–149 (EDYQ…LQIL). The interval 153-293 (NDSSENMDDE…NNNNNNNNNF (141 aa)) is disordered. Acidic residues predominate over residues 183–202 (NCDDDDDDDDDDDDDDDDEK). Low complexity predominate over residues 249-292 (NKNNNKNNNNNNNNNNNNNNNNNNNNNNNNNNNNNNNNNNNNNN). 9 TPR repeats span residues 300 to 331 (IRSS…ALLT), 336 to 359 (FEAF…LLEK), 366 to 438 (DSWI…DIST), 478 to 506 (DIQT…ILKQ), 515 to 542 (CLMV…LVDS), 573 to 602 (AISW…STTL), 607 to 635 (GASW…TSSR), 642 to 670 (LPLL…AKDI), and 675 to 709 (PMIF…KIKS). Over residues 403-434 (SNNNTFGANNNNNNNNNNNNNNNNNNNNNSNN) the composition is skewed to low complexity. The disordered stretch occupies residues 403 to 436 (SNNNTFGANNNNNNNNNNNNNNNNNNNNNSNNDI). A disordered region spans residues 738–767 (GIGNNNNNNNNRRTTTTTTTTSNNQKKNSS). TPR repeat units lie at residues 777-809 (ESWE…SLSL) and 814-843 (PSTY…SLSI).

This sequence belongs to the APC6/CDC16 family. In terms of assembly, the APC/C is composed of at least 13 subunits that stay tightly associated throughout the cell cycle: anapc1, anapc2, anapc3, anapc4, anapc5, anapc6, anapc7, anapc8, anapc10, anapc11, cdc20, cdc26 and cdh1.

The protein localises to the nucleus. It functions in the pathway protein modification; protein ubiquitination. Its function is as follows. Component of the anaphase promoting complex/cyclosome (APC/C), a cell cycle-regulated E3 ubiquitin-protein ligase complex that controls progression through mitosis and the G1 phase of the cell cycle. The chain is Anaphase-promoting complex subunit 6 (anapc6) from Dictyostelium discoideum (Social amoeba).